The sequence spans 78 residues: Large ribosomal subunit protein bL28 (78 aa).

This sequence belongs to the bacterial ribosomal protein bL28 family.

This is Large ribosomal subunit protein bL28 from Rippkaea orientalis (strain PCC 8801 / RF-1) (Cyanothece sp. (strain PCC 8801)).